Consider the following 341-residue polypeptide: Methionine import ATP-binding protein MetN 1 (341 aa).

An ABC transporter domain is found at 2–241; that stretch reads IKLNQIVKRY…PQHEVTKRFV (240 aa). Position 38-45 (38-45) interacts with ATP; it reads GFSGAGKS.

This sequence belongs to the ABC transporter superfamily. Methionine importer (TC 3.A.1.24) family. The complex is composed of two ATP-binding proteins (MetN), two transmembrane proteins (MetI) and a solute-binding protein (MetQ).

The protein localises to the cell membrane. The catalysed reaction is L-methionine(out) + ATP + H2O = L-methionine(in) + ADP + phosphate + H(+). The enzyme catalyses D-methionine(out) + ATP + H2O = D-methionine(in) + ADP + phosphate + H(+). Its function is as follows. Part of the ABC transporter complex MetNIQ involved in methionine import. Responsible for energy coupling to the transport system. The chain is Methionine import ATP-binding protein MetN 1 from Staphylococcus epidermidis (strain ATCC 12228 / FDA PCI 1200).